Here is a 394-residue protein sequence, read N- to C-terminus: MVMAMDRIALFSSSSSVYHHGSSHSHGSKSSRVFTIRSDSTAVGRKLYIPPREVHLQVKYSMPPQKLEIFKSLEGWANDNLLAYLKPVEKSWQPTDFLPEPESEGFYDQVKELRERCKELSDDYLIVLVGDMITEEALPTYQTMINTLDGVRDETGASPTPWAVWTRAWTAEENRHGDLLNKYLYLSGRVDMRQIEKTIQYLIGSGMDPKTENNPYLGFIYTSFQERATFISHGNTARLAKDLGDLTLGKICGTIAADERRHEHAYTKIVEKLFEIDPDTTVVGFADMMRKKISMPAHLMYDGRDDNLFDHFSSVAQRLGVYTAKDYADILQHLVERWNVEKLSDLSSEGNRAQDYLCGLPARIRKLEERAQGRTKEAAKNIPFSWIFGREVRA.

The N-terminal 37 residues, 1–37, are a transit peptide targeting the chloroplast; sequence MVMAMDRIALFSSSSSVYHHGSSHSHGSKSSRVFTIR. Residues Glu-135, Glu-173, His-176, Glu-226, Glu-259, and His-262 each coordinate Fe cation.

It belongs to the fatty acid desaturase type 2 family. In terms of assembly, homodimer. Requires Fe(2+) as cofactor. As to expression, ubiquitously expressed.

It localises to the plastid. The protein resides in the chloroplast. It catalyses the reaction octadecanoyl-[ACP] + 2 reduced [2Fe-2S]-[ferredoxin] + O2 + 2 H(+) = (9Z)-octadecenoyl-[ACP] + 2 oxidized [2Fe-2S]-[ferredoxin] + 2 H2O. Its pathway is lipid metabolism; fatty acid metabolism. Functionally, converts stearoyl-ACP to oleoyl-ACP by introduction of a cis double bond between carbons 9 and 10 of the acyl chain. The sequence is that of Stearoyl-[acyl-carrier-protein] 9-desaturase 1, chloroplastic (S-ACP-DES1) from Arabidopsis thaliana (Mouse-ear cress).